The primary structure comprises 133 residues: Ribosome-binding factor A (133 aa).

It belongs to the RbfA family. As to quaternary structure, monomer. Binds 30S ribosomal subunits, but not 50S ribosomal subunits or 70S ribosomes.

It is found in the cytoplasm. One of several proteins that assist in the late maturation steps of the functional core of the 30S ribosomal subunit. Associates with free 30S ribosomal subunits (but not with 30S subunits that are part of 70S ribosomes or polysomes). Required for efficient processing of 16S rRNA. May interact with the 5'-terminal helix region of 16S rRNA. The polypeptide is Ribosome-binding factor A (Shigella boydii serotype 18 (strain CDC 3083-94 / BS512)).